Here is a 255-residue protein sequence, read N- to C-terminus: MLEKILATKREEISQLQLPEKQYFPKKSLKASLQKTSLPLGLIAEIKQASPSKGVLCETISPTAIARVYEEGGASAISVLTDRTYFQGDTAYVAEVKKTVSLPVLRKDFILSPLQVEETACIGADAMLLIAGAMEAKQLHELYELAYSKGLECLVEVHSEEELESLLAVFTPEVIGINNRNLKTFQTSVSQTEQIAKMVPKEALLVSESGIHTPDDIARVKKAGANAVLIGEQLMRKDDKRQAIIDLFSESAINQ.

The protein belongs to the TrpC family.

It carries out the reaction 1-(2-carboxyphenylamino)-1-deoxy-D-ribulose 5-phosphate + H(+) = (1S,2R)-1-C-(indol-3-yl)glycerol 3-phosphate + CO2 + H2O. It participates in amino-acid biosynthesis; L-tryptophan biosynthesis; L-tryptophan from chorismate: step 4/5. The polypeptide is Indole-3-glycerol phosphate synthase (Shouchella clausii (strain KSM-K16) (Alkalihalobacillus clausii)).